We begin with the raw amino-acid sequence, 105 residues long: Small ribosomal subunit protein uS17 (105 aa).

The protein belongs to the universal ribosomal protein uS17 family. Part of the 30S ribosomal subunit.

In terms of biological role, one of the primary rRNA binding proteins, it binds specifically to the 5'-end of 16S ribosomal RNA. The protein is Small ribosomal subunit protein uS17 of Thermus thermophilus (strain ATCC BAA-163 / DSM 7039 / HB27).